The sequence spans 940 residues: Serine/threonine-protein kinase PLK4 (940 aa).

A Protein kinase domain is found at Phe12–Met265. ATP-binding positions include Leu18 to Val26 and Lys41. Asp136 serves as the catalytic Proton acceptor. Disordered stretches follow at residues His262 to Arg353 and Arg409 to Val529. A compositionally biased stretch (low complexity) spans Ser273 to Arg305. Composition is skewed to polar residues over residues Phe337–Asp349, Asn440–Phe465, and Gly494–Asn519. The region spanning Cys563 to Lys676 is the Cryptic POLO box 1 (CPB1) domain. In terms of domain architecture, Cryptic POLO box 2 (CPB2) spans Thr677–Pro791. The region spanning Lys857–Asn935 is the POLO box domain.

The protein belongs to the protein kinase superfamily. Ser/Thr protein kinase family. CDC5/Polo subfamily. As to quaternary structure, homodimer. Ubiquitinated; leading to its degradation by the proteasome.

It is found in the cytoplasm. The protein resides in the cytoskeleton. The protein localises to the microtubule organizing center. Its subcellular location is the centrosome. It localises to the centriole. It catalyses the reaction L-seryl-[protein] + ATP = O-phospho-L-seryl-[protein] + ADP + H(+). The enzyme catalyses L-threonyl-[protein] + ATP = O-phospho-L-threonyl-[protein] + ADP + H(+). In terms of biological role, serine/threonine-protein kinase that plays a central role in centriole duplication. Able to trigger procentriole formation on the surface of the parental centriole cylinder, leading to the recruitment of centriole biogenesis proteins such as sass6, cpap, ccp110, cep135 and gamma-tubulin. When overexpressed, it is able to induce centrosome amplification through the simultaneous generation of multiple procentrioles adjoining each parental centriole during S phase. Its central role in centriole replication suggests a possible role in tumorigenesis, centrosome aberrations being frequently observed in tumors. Also involved in deuterosome-mediated centriole amplification in multiciliated that can generate more than 100 centrioles. The sequence is that of Serine/threonine-protein kinase PLK4 from Danio rerio (Zebrafish).